The following is a 280-amino-acid chain: Hematopoietically-expressed homeobox protein HHEX homolog (280 aa).

Disordered regions lie at residues 1 to 35 (MSTL…GLAP) and 221 to 280 (RRVK…EKEA). The segment at residues 165–224 (RKGGQVRFSNDQTMELEKKFESQKYLSPPERKKLAKLLQLSERQVKTWFQNRRAKWRRVK) is a DNA-binding region (homeobox). The segment covering 232 to 252 (GEGDENSHEKPRDLDRDDFSR) has biased composition (basic and acidic residues).

It localises to the nucleus. Functionally, transcription factor that may play a central role in activating or maintaining gene expression in the vegetal pole. Part of a gene regulatory circuit with Erg and Tgif that operates early in mesoderm development. This is Hematopoietically-expressed homeobox protein HHEX homolog from Patiria miniata (Bat star).